The sequence spans 410 residues: WD repeat-containing protein jip5 (410 aa).

WD repeat units follow at residues 9-48, 74-113, 119-160, 223-264, 273-316, and 320-357; these read PLSA…EEEH, RHKG…VENK, AKDG…SKVA, VSST…DQDE, GGGE…VVSE, and DETE…IGGE. A disordered region spans residues 41–65; that stretch reads PTEEEEEHSDDEQASVSSSRNGKGH. Residues 43 to 53 are compositionally biased toward acidic residues; that stretch reads EEEEEHSDDEQ. A disordered region spans residues 354 to 410; the sequence is IGGEKRGFGGDSDDSDDDSDDSDHEPKQGDDSRRKRKKQKGKDRGKGPEIMAFADLD. A compositionally biased stretch (acidic residues) spans 364–376; that stretch reads DSDDSDDDSDDSD. Over residues 377-386 the composition is skewed to basic and acidic residues; the sequence is HEPKQGDDSR.

The protein belongs to the WD repeat WDR55 family.

Its subcellular location is the nucleus. It is found in the nucleolus. In Emericella nidulans (strain FGSC A4 / ATCC 38163 / CBS 112.46 / NRRL 194 / M139) (Aspergillus nidulans), this protein is WD repeat-containing protein jip5 (jip5).